Consider the following 297-residue polypeptide: Bifunctional protein FolD 2 (297 aa).

Residues 177-179 (GKS), isoleucine 202, and isoleucine 243 each bind NADP(+).

Belongs to the tetrahydrofolate dehydrogenase/cyclohydrolase family. Homodimer.

It catalyses the reaction (6R)-5,10-methylene-5,6,7,8-tetrahydrofolate + NADP(+) = (6R)-5,10-methenyltetrahydrofolate + NADPH. It carries out the reaction (6R)-5,10-methenyltetrahydrofolate + H2O = (6R)-10-formyltetrahydrofolate + H(+). The protein operates within one-carbon metabolism; tetrahydrofolate interconversion. In terms of biological role, catalyzes the oxidation of 5,10-methylenetetrahydrofolate to 5,10-methenyltetrahydrofolate and then the hydrolysis of 5,10-methenyltetrahydrofolate to 10-formyltetrahydrofolate. The sequence is that of Bifunctional protein FolD 2 from Rhizorhabdus wittichii (strain DSM 6014 / CCUG 31198 / JCM 15750 / NBRC 105917 / EY 4224 / RW1) (Sphingomonas wittichii).